A 75-amino-acid polypeptide reads, in one-letter code: Small ribosomal subunit protein bS18 (75 aa).

Belongs to the bacterial ribosomal protein bS18 family. In terms of assembly, part of the 30S ribosomal subunit. Forms a tight heterodimer with protein bS6.

In terms of biological role, binds as a heterodimer with protein bS6 to the central domain of the 16S rRNA, where it helps stabilize the platform of the 30S subunit. This Chromobacterium violaceum (strain ATCC 12472 / DSM 30191 / JCM 1249 / CCUG 213 / NBRC 12614 / NCIMB 9131 / NCTC 9757 / MK) protein is Small ribosomal subunit protein bS18.